The sequence spans 209 residues: Large ribosomal subunit protein uL3 (209 aa).

The tract at residues 121–154 (GGIKRHNFHRGPMAHGSKYHRRPGSSAAKGPART) is disordered.

It belongs to the universal ribosomal protein uL3 family. As to quaternary structure, part of the 50S ribosomal subunit. Forms a cluster with proteins L14 and L19.

One of the primary rRNA binding proteins, it binds directly near the 3'-end of the 23S rRNA, where it nucleates assembly of the 50S subunit. This is Large ribosomal subunit protein uL3 from Desulforamulus reducens (strain ATCC BAA-1160 / DSM 100696 / MI-1) (Desulfotomaculum reducens).